The primary structure comprises 443 residues: Glutamine synthetase (443 aa).

One can recognise a GS beta-grasp domain in the interval 16–101 (NGVKFIRLQF…LICDVYKPDG (86 aa)). In terms of domain architecture, GS catalytic spans 108–443 (PRHVLKRANA…WELENYLNKY (336 aa)). E131 and E133 together coordinate Mg(2+). Residue E183 participates in ATP binding. 2 residues coordinate Mg(2+): E188 and E195. Residues 239–240 (NG) and G240 each bind L-glutamate. Position 244 (H244) interacts with Mg(2+). S248 contacts ATP. L-glutamate-binding residues include R297, E303, and R315. 2 residues coordinate ATP: R315 and R320. E332 serves as a coordination point for Mg(2+). R334 is a binding site for L-glutamate.

This sequence belongs to the glutamine synthetase family. In terms of assembly, oligomer of 12 subunits arranged in the form of two hexagons. In its feedback-inhibited form, interacts with TnrA in order to block its DNA-binding activity. Requires Mg(2+) as cofactor.

It localises to the cytoplasm. It catalyses the reaction L-glutamate + NH4(+) + ATP = L-glutamine + ADP + phosphate + H(+). Inhibited by glutamine. Glutamine synthetase (GS) is an unusual multitasking protein that functions as an enzyme, a transcription coregulator, and a chaperone in ammonium assimilation and in the regulation of genes involved in nitrogen metabolism. It catalyzes the ATP-dependent biosynthesis of glutamine from glutamate and ammonia. Feedback-inhibited GlnA also interacts with and regulates the activity of the transcriptional regulator TnrA. During nitrogen limitation, TnrA is in its DNA-binding active state and turns on the transcription of genes required for nitrogen assimilation. Under conditions of nitrogen excess, feedback-inhibited GlnA forms a stable complex with TnrA, which inhibits its DNA-binding activity. In contrast, feedback-inhibited GlnA acts as a chaperone to stabilize the DNA-binding activity of GlnR, which represses the transcription of nitrogen assimilation genes. This is Glutamine synthetase from Clostridium saccharobutylicum.